Here is a 218-residue protein sequence, read N- to C-terminus: Pyridoxine/pyridoxamine 5'-phosphate oxidase (218 aa).

Residues 14–17 (RREY) and Lys-72 each bind substrate. FMN contacts are provided by residues 67 to 72 (RIVLLK), 82 to 83 (YT), Arg-88, Lys-89, and Gln-111. Residues Tyr-129, Arg-133, and Ser-137 each contribute to the substrate site. Residues 146 to 147 (QS) and Trp-191 each bind FMN. 197 to 199 (RLH) is a binding site for substrate. Arg-201 provides a ligand contact to FMN.

The protein belongs to the pyridoxamine 5'-phosphate oxidase family. In terms of assembly, homodimer. FMN serves as cofactor.

The catalysed reaction is pyridoxamine 5'-phosphate + O2 + H2O = pyridoxal 5'-phosphate + H2O2 + NH4(+). The enzyme catalyses pyridoxine 5'-phosphate + O2 = pyridoxal 5'-phosphate + H2O2. Its pathway is cofactor metabolism; pyridoxal 5'-phosphate salvage; pyridoxal 5'-phosphate from pyridoxamine 5'-phosphate: step 1/1. The protein operates within cofactor metabolism; pyridoxal 5'-phosphate salvage; pyridoxal 5'-phosphate from pyridoxine 5'-phosphate: step 1/1. Its function is as follows. Catalyzes the oxidation of either pyridoxine 5'-phosphate (PNP) or pyridoxamine 5'-phosphate (PMP) into pyridoxal 5'-phosphate (PLP). The protein is Pyridoxine/pyridoxamine 5'-phosphate oxidase of Escherichia coli O45:K1 (strain S88 / ExPEC).